The primary structure comprises 221 residues: Transmembrane protein 267 (221 aa).

Transmembrane regions (helical) follow at residues 28–48, 57–77, 86–106, 121–141, and 182–204; these read ASAG…LPFI, LFDN…VIGL, VILA…MAGS, LHCS…MWAC, and ISYW…LMYL.

Its subcellular location is the membrane. This is Transmembrane protein 267 (tmem267) from Danio rerio (Zebrafish).